Here is a 317-residue protein sequence, read N- to C-terminus: 2,3,4,5-tetrahydropyridine-2,6-dicarboxylate N-succinyltransferase (317 aa).

Mg(2+) contacts are provided by aspartate 166 and glutamate 183. Residue glutamate 199 is the Acyl-anhydride intermediate of the active site. Succinyl-CoA is bound by residues arginine 201, glycine 216, serine 219, alanine 242, 257-258 (EA), glycine 265, lysine 277, and 290-293 (RRNS).

This sequence belongs to the type 2 tetrahydrodipicolinate N-succinyltransferase family. Homotrimer.

It localises to the cytoplasm. It carries out the reaction (S)-2,3,4,5-tetrahydrodipicolinate + succinyl-CoA + H2O = (S)-2-succinylamino-6-oxoheptanedioate + CoA. The protein operates within amino-acid biosynthesis; L-lysine biosynthesis via DAP pathway; LL-2,6-diaminopimelate from (S)-tetrahydrodipicolinate (succinylase route): step 1/3. Catalyzes the conversion of the cyclic tetrahydrodipicolinate (THDP) into the acyclic N-succinyl-L-2-amino-6-oxopimelate using succinyl-CoA. The polypeptide is 2,3,4,5-tetrahydropyridine-2,6-dicarboxylate N-succinyltransferase (dapD) (Mycobacterium tuberculosis (strain CDC 1551 / Oshkosh)).